The chain runs to 395 residues: ATP phosphoribosyltransferase regulatory subunit (395 aa).

Belongs to the class-II aminoacyl-tRNA synthetase family. HisZ subfamily. Heteromultimer composed of HisG and HisZ subunits.

It is found in the cytoplasm. Its pathway is amino-acid biosynthesis; L-histidine biosynthesis; L-histidine from 5-phospho-alpha-D-ribose 1-diphosphate: step 1/9. Required for the first step of histidine biosynthesis. May allow the feedback regulation of ATP phosphoribosyltransferase activity by histidine. This chain is ATP phosphoribosyltransferase regulatory subunit, found in Pseudomonas fluorescens (strain Pf0-1).